Consider the following 115-residue polypeptide: NADH-ubiquinone oxidoreductase chain 3 (115 aa).

A run of 3 helical transmembrane segments spans residues 4 to 24, 55 to 75, and 84 to 104; these read ALTL…AFWL, FFLV…LLPL, and LTTM…SLAY.

It belongs to the complex I subunit 3 family. In terms of assembly, core subunit of respiratory chain NADH dehydrogenase (Complex I) which is composed of 45 different subunits. Interacts with TMEM186. Interacts with TMEM242.

It localises to the mitochondrion inner membrane. The catalysed reaction is a ubiquinone + NADH + 5 H(+)(in) = a ubiquinol + NAD(+) + 4 H(+)(out). Core subunit of the mitochondrial membrane respiratory chain NADH dehydrogenase (Complex I) which catalyzes electron transfer from NADH through the respiratory chain, using ubiquinone as an electron acceptor. Essential for the catalytic activity of complex I. In Phoca vitulina (Harbor seal), this protein is NADH-ubiquinone oxidoreductase chain 3.